The following is a 103-amino-acid chain: Large ribosomal subunit protein bL21 (103 aa).

It belongs to the bacterial ribosomal protein bL21 family. Part of the 50S ribosomal subunit. Contacts protein L20.

Functionally, this protein binds to 23S rRNA in the presence of protein L20. The sequence is that of Large ribosomal subunit protein bL21 from Legionella pneumophila (strain Paris).